Reading from the N-terminus, the 288-residue chain is SUR7 family protein pun1 (288 aa).

Residues 1–11 are Cytoplasmic-facing; it reads MGMGFNPIKAL. Residues 12–32 traverse the membrane as a helical segment; that stretch reads FTGIGTVCVGVGALLSILCII. N-linked (GlcNAc...) asparagine glycosylation is found at Asn33, Asn50, Asn59, Asn66, Asn122, Asn153, and Asn160. Residues 33–185 lie on the Extracellular side of the membrane; sequence NQTQHNIAFQ…GACYAMRAMY (153 aa). Residues 186 to 206 form a helical membrane-spanning segment; the sequence is ILGFIFFALTIVSIVISCLPF. The Cytoplasmic segment spans residues 207-210; sequence FGPL. Residues 211–231 form a helical membrane-spanning segment; the sequence is FLNVFSFFATIFTFIAAVIAV. Residues 232-257 are Extracellular-facing; that stretch reads ATYRIAISELEKNIEILNIPIVLGKK. The helical transmembrane segment at 258-278 threads the bilayer; sequence IYAYSFLSAAAGLAACILYFI. Topologically, residues 279–288 are cytoplasmic; the sequence is GNLTSGYSPL.

It belongs to the SUR7 family.

Its subcellular location is the golgi apparatus membrane. The protein resides in the cell membrane. The protein localises to the cell tip. Contributes to the wild-type cellular response to nitrogen stress through signaling pathways that regulate the expression of genes involved in amino acid biosynthesis. Required for wild-type filamentous growth, cell growth, and cell-cell adhesion. The protein is SUR7 family protein pun1 (pun1) of Schizosaccharomyces pombe (strain 972 / ATCC 24843) (Fission yeast).